The sequence spans 244 residues: 1-(5-phosphoribosyl)-5-[(5-phosphoribosylamino)methylideneamino] imidazole-4-carboxamide isomerase (244 aa).

The active-site Proton acceptor is D9. D131 (proton donor) is an active-site residue.

The protein belongs to the HisA/HisF family.

Its subcellular location is the cytoplasm. It catalyses the reaction 1-(5-phospho-beta-D-ribosyl)-5-[(5-phospho-beta-D-ribosylamino)methylideneamino]imidazole-4-carboxamide = 5-[(5-phospho-1-deoxy-D-ribulos-1-ylimino)methylamino]-1-(5-phospho-beta-D-ribosyl)imidazole-4-carboxamide. Its pathway is amino-acid biosynthesis; L-histidine biosynthesis; L-histidine from 5-phospho-alpha-D-ribose 1-diphosphate: step 4/9. The polypeptide is 1-(5-phosphoribosyl)-5-[(5-phosphoribosylamino)methylideneamino] imidazole-4-carboxamide isomerase (Campylobacter jejuni subsp. jejuni serotype O:6 (strain 81116 / NCTC 11828)).